Reading from the N-terminus, the 483-residue chain is ATP-dependent RNA helicase DDX25 (483 aa).

Thr49 carries the post-translational modification Phosphothreonine. Residues 61–74 (LAANSLLNKLIRQS) carry the Nuclear export signal motif. Residues 97–125 (KTFEELRLKEELLKGIYAMGFNRPSKIQE) carry the Q motif motif. Residues 100–114 (EELRLKEELLKGIYA) carry the Nuclear localization signal motif. The region spanning 130 to 300 (MMLAHPPQNL…ERIIPDPNVI (171 aa)) is the Helicase ATP-binding domain. 143–150 (SQSGTGKT) contacts ATP. The short motif at 247–250 (DEAD) is the DEAD box element. Positions 311-478 (NIRQYYVLCE…QLDPEDMDEI (168 aa)) constitute a Helicase C-terminal domain.

Belongs to the DEAD box helicase family. Phosphorylated on threonine residues. The phosphorylated form is found in the cytoplasm but not in the nucleus. Isoform 1 is expressed in germ cells. Isoform 2 is highly expressed in Leydig cells and weakly expressed in the pituitary and hypothalamus. Isoform 3 is weakly expressed only in germ cells.

It is found in the cytoplasm. It localises to the nucleus. It carries out the reaction ATP + H2O = ADP + phosphate + H(+). Its function is as follows. ATP-dependent RNA helicase. Required for mRNA export and translation regulation during spermatid development. The chain is ATP-dependent RNA helicase DDX25 (Ddx25) from Rattus norvegicus (Rat).